The chain runs to 694 residues: Elongation factor G (694 aa).

Residues 6 to 288 enclose the tr-type G domain; sequence KLYRNIGIAA…GVIEYLPSPT (283 aa). Residues 15–22, 86–90, and 140–143 contribute to the GTP site; these read AHVDAGKT, DTPGH, and NKMD.

This sequence belongs to the TRAFAC class translation factor GTPase superfamily. Classic translation factor GTPase family. EF-G/EF-2 subfamily.

The protein resides in the cytoplasm. Its function is as follows. Catalyzes the GTP-dependent ribosomal translocation step during translation elongation. During this step, the ribosome changes from the pre-translocational (PRE) to the post-translocational (POST) state as the newly formed A-site-bound peptidyl-tRNA and P-site-bound deacylated tRNA move to the P and E sites, respectively. Catalyzes the coordinated movement of the two tRNA molecules, the mRNA and conformational changes in the ribosome. The sequence is that of Elongation factor G from Legionella pneumophila subsp. pneumophila (strain Philadelphia 1 / ATCC 33152 / DSM 7513).